A 338-amino-acid polypeptide reads, in one-letter code: MTIRIAINGFGRIGRSVLRALYESGRRAEISVVAINELANAEGMAHLLKYDSSHGRFAWDVRQECDKLYVGDDIIRLIHQPEIEQLPWGELGIDVVLDCSGVYGSRADGEAHLTSGAKKVLFAHPGGHDLDATVVYGVNHQDLQADHRIVSNASCTTNCIIPIIQLLDVAFGIESGTVTTIHSSMNDQPVIDAYHQDLRRTRAASQSIIPVDTKLAAGITRIFPKFCDRFEAISVRVPTINVTAIDLSVSVTSPVDVAEVNQLLQKAARGSFRGIVDYTELPLVSTDFNHDPHSAIVDCTQTRVSGQHLIKTLVWCDNEWGFANRMLDTTLAMARSGF.

Residue 12-13 participates in NAD(+) binding; sequence RI. Residues 154-156, Arg-200, 213-214, and Arg-236 contribute to the substrate site; these read SCT and TK. The Nucleophile role is filled by Cys-155. Asn-318 contacts NAD(+).

It belongs to the glyceraldehyde-3-phosphate dehydrogenase family. Epd subfamily. As to quaternary structure, homotetramer.

It localises to the cytoplasm. It carries out the reaction D-erythrose 4-phosphate + NAD(+) + H2O = 4-phospho-D-erythronate + NADH + 2 H(+). It participates in cofactor biosynthesis; pyridoxine 5'-phosphate biosynthesis; pyridoxine 5'-phosphate from D-erythrose 4-phosphate: step 1/5. In terms of biological role, catalyzes the NAD-dependent conversion of D-erythrose 4-phosphate to 4-phosphoerythronate. The chain is D-erythrose-4-phosphate dehydrogenase from Yersinia enterocolitica serotype O:8 / biotype 1B (strain NCTC 13174 / 8081).